Here is a 120-residue protein sequence, read N- to C-terminus: Glycine cleavage system H protein (120 aa).

The region spanning 17 to 99 is the Lipoyl-binding domain; sequence IATVGITSHA…QGAGWLYRMR (83 aa). K58 is modified (N6-lipoyllysine).

The protein belongs to the GcvH family. In terms of assembly, the glycine cleavage system is composed of four proteins: P, T, L and H. Requires (R)-lipoate as cofactor.

Its function is as follows. The glycine cleavage system catalyzes the degradation of glycine. The H protein shuttles the methylamine group of glycine from the P protein to the T protein. This chain is Glycine cleavage system H protein, found in Methylobacterium nodulans (strain LMG 21967 / CNCM I-2342 / ORS 2060).